The sequence spans 128 residues: Aspartate 1-decarboxylase (128 aa).

S25 acts as the Schiff-base intermediate with substrate; via pyruvic acid in catalysis. Residue S25 is modified to Pyruvic acid (Ser). Position 57 (T57) interacts with substrate. Residue Y58 is the Proton donor of the active site. 73–75 (GSA) contributes to the substrate binding site.

Belongs to the PanD family. In terms of assembly, heterooctamer of four alpha and four beta subunits. Requires pyruvate as cofactor. Is synthesized initially as an inactive proenzyme, which is activated by self-cleavage at a specific serine bond to produce a beta-subunit with a hydroxyl group at its C-terminus and an alpha-subunit with a pyruvoyl group at its N-terminus.

The protein localises to the cytoplasm. The enzyme catalyses L-aspartate + H(+) = beta-alanine + CO2. It functions in the pathway cofactor biosynthesis; (R)-pantothenate biosynthesis; beta-alanine from L-aspartate: step 1/1. In terms of biological role, catalyzes the pyruvoyl-dependent decarboxylation of aspartate to produce beta-alanine. This Burkholderia ambifaria (strain ATCC BAA-244 / DSM 16087 / CCUG 44356 / LMG 19182 / AMMD) (Burkholderia cepacia (strain AMMD)) protein is Aspartate 1-decarboxylase.